A 344-amino-acid chain; its full sequence is 3,4-dihydroxy-2-butanone 4-phosphate synthase (344 aa).

A DHBP synthase region spans residues 1-202; sequence MILRRVTEAL…VSDLISYRLE (202 aa). Residues 27-28, aspartate 32, 139-143, and glutamate 163 each bind D-ribulose 5-phosphate; these read RE and RTGHT. Glutamate 28 contacts Mg(2+). Histidine 142 is a Mg(2+) binding site. The interval 203-344 is GTP cyclohydrolase II-like; it reads NESLLKMFCQ…GLKLVETISL (142 aa).

It in the N-terminal section; belongs to the DHBP synthase family. The protein in the C-terminal section; belongs to the GTP cyclohydrolase II family. The cofactor is Mg(2+). Requires Mn(2+) as cofactor.

The catalysed reaction is D-ribulose 5-phosphate = (2S)-2-hydroxy-3-oxobutyl phosphate + formate + H(+). It participates in cofactor biosynthesis; riboflavin biosynthesis; 2-hydroxy-3-oxobutyl phosphate from D-ribulose 5-phosphate: step 1/1. Functionally, catalyzes the conversion of D-ribulose 5-phosphate to formate and 3,4-dihydroxy-2-butanone 4-phosphate. This chain is 3,4-dihydroxy-2-butanone 4-phosphate synthase (ribB), found in Helicobacter pylori (strain J99 / ATCC 700824) (Campylobacter pylori J99).